A 353-amino-acid chain; its full sequence is Protein pelota homolog (353 aa).

This sequence belongs to the eukaryotic release factor 1 family. Pelota subfamily. In terms of assembly, monomer. The cofactor is a divalent metal cation.

Its subcellular location is the cytoplasm. Functionally, may function in recognizing stalled ribosomes, interact with stem-loop structures in stalled mRNA molecules, and effect endonucleolytic cleavage of the mRNA. May play a role in the release non-functional ribosomes and degradation of damaged mRNAs. Has endoribonuclease activity. The protein is Protein pelota homolog of Methanothermobacter thermautotrophicus (strain ATCC 29096 / DSM 1053 / JCM 10044 / NBRC 100330 / Delta H) (Methanobacterium thermoautotrophicum).